The following is an 80-amino-acid chain: Defensin-like protein 17 (80 aa).

The first 29 residues, 1–29 (MAKSATIITFLFAALVLFAAFEAPTMVEA), serve as a signal peptide directing secretion. Glutamine 30 bears the Pyrrolidone carboxylic acid mark. 4 disulfides stabilise this stretch: cysteine 33–cysteine 80, cysteine 44–cysteine 65, cysteine 50–cysteine 74, and cysteine 54–cysteine 76.

Belongs to the DEFL family.

It localises to the secreted. In terms of biological role, confers broad-spectrum resistance to pathogens. The sequence is that of Defensin-like protein 17 (PDF1.2C) from Arabidopsis thaliana (Mouse-ear cress).